Here is a 641-residue protein sequence, read N- to C-terminus: Ribosomal oxygenase 1 (641 aa).

Methionine 1 is modified (N-acetylmethionine). Disordered regions lie at residues methionine 1 to arginine 35 and arginine 54 to proline 80. The segment covering arginine 12–glutamine 23 has biased composition (basic residues). Serine 60, serine 63, and serine 109 each carry phosphoserine. The region spanning cysteine 294–alanine 439 is the JmjC domain. Residues histidine 340, aspartate 342, and histidine 405 each coordinate Fe cation.

Belongs to the ROX family. NO66 subfamily. As to quaternary structure, interacts with SP7/OSX; the interaction is direct. Interacts with MYC. Interacts with PHF19; leading to its recruitment to H3K36me3 sites. Requires Fe(2+) as cofactor. As to expression, widely expressed. Overexpressed in lung carcinomas.

It localises to the nucleus. The protein resides in the nucleolus. Its subcellular location is the nucleoplasm. The catalysed reaction is N(6),N(6)-dimethyl-L-lysyl(36)-[histone H3] + 2 2-oxoglutarate + 2 O2 = L-lysyl(36)-[histone H3] + 2 formaldehyde + 2 succinate + 2 CO2. It catalyses the reaction N(6)-methyl-L-lysyl-[protein] + 2-oxoglutarate + O2 = L-lysyl-[protein] + formaldehyde + succinate + CO2. The enzyme catalyses L-histidyl-[protein] + 2-oxoglutarate + O2 = (3S)-3-hydroxy-L-histidyl-[protein] + succinate + CO2. Oxygenase that can act as both a histone lysine demethylase and a ribosomal histidine hydroxylase. Specifically demethylates 'Lys-4' (H3K4me) and 'Lys-36' (H3K36me) of histone H3, thereby playing a central role in histone code. Preferentially demethylates trimethylated H3 'Lys-4' (H3K4me3) and monomethylated H3 'Lys-4' (H3K4me1) residues, while it has weaker activity for dimethylated H3 'Lys-36' (H3K36me2). Acts as a regulator of osteoblast differentiation via its interaction with SP7/OSX by demethylating H3K4me and H3K36me, thereby inhibiting SP7/OSX-mediated promoter activation. Also catalyzes demethylation of non-histone proteins, such as CGAS: demethylation of monomethylated CGAS promotes interaction between CGAS and PARP1, followed by PARP1 inactivation. Also catalyzes the hydroxylation of 60S ribosomal protein L8 on 'His-216', thereby playing a role in ribosome biogenesis. Participates in MYC-induced transcriptional activation. This chain is Ribosomal oxygenase 1, found in Homo sapiens (Human).